The primary structure comprises 194 residues: tRNA (guanine-N(1)-)-methyltransferase (194 aa).

S-adenosyl-L-methionine-binding positions include glycine 78 and 97-102 (IGDYVL).

The protein belongs to the RNA methyltransferase TrmD family. In terms of assembly, homodimer.

It localises to the cytoplasm. The enzyme catalyses guanosine(37) in tRNA + S-adenosyl-L-methionine = N(1)-methylguanosine(37) in tRNA + S-adenosyl-L-homocysteine + H(+). Specifically methylates guanosine-37 in various tRNAs. In Mycoplasma mobile (strain ATCC 43663 / 163K / NCTC 11711) (Mesomycoplasma mobile), this protein is tRNA (guanine-N(1)-)-methyltransferase.